The chain runs to 1071 residues: MPAIMTMLADHAARQLLDFSQKLDINLLDNVVNCLYHGEGAQQRMAQEVLTHLKEHPDAWTRVDTILEFSQNMNTKYYGLQILENVIKTRWKILPRNQCEGIKKYVVGLIIKTSSDPTCVEKEKVYIGKLNMILVQILKQEWPKHWPTFISDIVGASRTSESLCQNNMVILKLLSEEVFDFSSGQITQVKSKHLKDSMCNEFSQIFQLCQFVMENSQNAPLVHATLETLLRFLNWIPLGYIFETKLISTLIYKFLNVPMFRNVSLKCLTEIAGVSVSQYEEQFVTLFTLTMMQLKQMLPLNTNIRLAYSNGKDDEQNFIQNLSLFLCTFLKEHDQLIEKRLNLRETLMEALHYMLLVSEVEETEIFKICLEYWNHLAAELYRESPFSTSASPLLSGSQHFDVPPRRQLYLPMLFKVRLLMVSRMAKPEEVLVVENDQGEVVREFMKDTDSINLYKNMRETLVYLTHLDYVDTERIMTEKLHNQVNGTEWSWKNLNTLCWAIGSISGAMHEEDEKRFLVTVIKDLLGLCEQKRGKDNKAIIASNIMYIVGQYPRFLRAHWKFLKTVVNKLFEFMHETHDGVQDMACDTFIKIAQKCRRHFVQVQVGEVMPFIDEILNNINTIICDLQPQQVHTFYEAVGYMIGAQTDQTVQEHLIEKYMLLPNQVWDSIIQQATKNVDILKDPETVKQLGSILKTNVRACKAVGHPFVIQLGRIYLDMLNVYKCLSENISAAIQANGEMVTKQPLIRSMRTVKRETLKLISGWVSRSNDPQMVAENFVPPLLDAVLIDYQRNVPAAREPEVLSTMAIIVNKLGGHITAEIPQIFDAVFECTLNMINKDFEEYPEHRTNFFLLLQAVNSHCFPAFLAIPPTQFKLVLDSIIWAFKHTMRNVADTGLQILFTLLQNVAQEEAAAQSFYQTYFCDILQHIFSVVTDTSHTAGLTMHASILAYMFNLVEEGKISTSLNPGNPVNNQIFLQEYVANLLKSAFPHLQDAQVKLFVTGLFSLNQDIPAFKEHLRDFLVQIKEFAGEDTSDLFLEEREIALRQADEEKHKRQMSVPGIFNPHEIPEEMCD.

The segment at 1–679 is necessary for HTLV-1 Rex-mediated mRNA export; that stretch reads MPAIMTMLAD…QQATKNVDIL (679 aa). Positions 46–112 constitute an Importin N-terminal domain; the sequence is AQEVLTHLKE…KKYVVGLIIK (67 aa). HEAT repeat units lie at residues 217-240, 241-277, 354-472, 515-553, 560-597, and 602-639; these read QNAPLVHATLETLLRFLNWIPLGY, IFETKLISTLIYKFLNVPMFRNVSLKCLTEIAGVSVS, MLLV…YVDT, RFLVTVIKDLLGLCEQKRGKDNKAIIASNIMYIVGQYPR, KFLKTVVNKLFEFMHETHDGVQDMACDTFIKIAQKCRR, and VQVGEVMPFIDEILNNINTIICDLQPQQVHTFYEAVGY. Residues 327 to 450 form an interaction with Ran and nuclear export complex formation region; that stretch reads CTFLKEHDQL…VREFMKDTDS (124 aa). S391 carries the post-translational modification Phosphoserine. Residues 411-414 are necessary for HTLV-1 Rex multimerization; sequence PMLF. Residues 411–481 form an interaction with RANBP3 region; that stretch reads PMLFKVRLLM…TERIMTEKLH (71 aa). Residue K446 is modified to N6-acetyllysine. T448 carries the post-translational modification Phosphothreonine. The residue at position 450 (S450) is a Phosphoserine. Y454 carries the post-translational modification Phosphotyrosine. An N6-acetyllysine modification is found at K693. HEAT repeat units follow at residues 775–813, 885–916, 917–954, and 1002–1039; these read NFVPPLLDAVLIDYQRNVPAAREPEVLSTMAIIVNKLGG, TMRNVADTGLQILFTLLQNVAQEEAAAQSFYQ, TYFCDILQHIFSVVTDTSHTAGLTMHASILAYMFNLVE, and FSLNQDIPAFKEHLRDFLVQIKEFAGEDTSDLFLEERE. The tract at residues 800 to 820 is interaction with HIV-1 Rev; it reads VLSTMAIIVNKLGGHITAEIP. At S1031 the chain carries Phosphoserine.

This sequence belongs to the exportin family. In terms of assembly, found in a U snRNA export complex with PHAX/RNUXA, NCBP1/CBP80, NCBP2/CBP20, RAN, XPO1 and m7G-capped RNA. Component of a nuclear export receptor complex composed of KPNB1, RAN, SNUPN and XPO1. Found in a trimeric export complex with SNUPN, RAN and XPO1. Found in a nuclear export complex with RANBP3 and RAN. Found in a 60S ribosomal subunit export complex with NMD3, RAN, XPO1. Interacts with DDX3X, NMD3, NUP42, NUP88, NUP214, RANBP3 and TERT. Interacts with NEMF (via its N-terminus). Interacts with the monomeric form of BIRC5/survivin deacetylated at 'Lys-129'. Interacts with DTNBP1 and SERTAD2; the interactions translocate DTNBP1 and SERTAD2 out of the nucleus. Interacts with ATF2. Interacts with SLC35G1 and STIM1. Interacts with DCAF8. Interacts with CPEB3. Interacts with HAX1. Interacts with BOK; translocates to the cytoplasm. Interacts with HSP90AB1. Interacts with LRPPRC; interacts with LRPPRC alone and also when LRPPRC is in complex with EIF4E and with EIF4E sensitivity element (4ESE)-containing mRNAs to form an EIF4E-dependent mRNA export complex. (Microbial infection) Interacts with HIV-1 Rev. As to quaternary structure, (Microbial infection) Interacts with HTLV-1 Rex. In terms of assembly, (Microbial infection) Interacts with influenza A nucleoprotein. (Microbial infection) Interacts with Epstein-Barr virus protein BMLF1. As to quaternary structure, (Microbial infection) Part of a tetrameric complex composed of CRM1, importin alpha/beta dimer and the Venezuelan equine encephalitis virus (VEEV) capsid; this complex blocks the receptor-mediated transport through the nuclear pore. In terms of assembly, (Microbial infection) Interacts with SARS-CoV virus protein ORF9b; this interaction mediates protein ORF9b export out of the nucleus. As to expression, expressed in heart, brain, placenta, lung, liver, skeletal muscle, pancreas, spleen, thymus, prostate, testis, ovary, small intestine, colon and peripheral blood leukocytes. Not expressed in the kidney.

It is found in the cytoplasm. Its subcellular location is the nucleus. The protein localises to the nucleoplasm. It localises to the cajal body. The protein resides in the nucleolus. Mediates the nuclear export of cellular proteins (cargos) bearing a leucine-rich nuclear export signal (NES) and of RNAs. In the nucleus, in association with RANBP3, binds cooperatively to the NES on its target protein and to the GTPase RAN in its active GTP-bound form (Ran-GTP). Docking of this complex to the nuclear pore complex (NPC) is mediated through binding to nucleoporins. Upon transit of a nuclear export complex into the cytoplasm, disassembling of the complex and hydrolysis of Ran-GTP to Ran-GDP (induced by RANBP1 and RANGAP1, respectively) cause release of the cargo from the export receptor. The directionality of nuclear export is thought to be conferred by an asymmetric distribution of the GTP- and GDP-bound forms of Ran between the cytoplasm and nucleus. Involved in U3 snoRNA transport from Cajal bodies to nucleoli. Binds to late precursor U3 snoRNA bearing a TMG cap. Its function is as follows. (Microbial infection) Mediates the export of unspliced or incompletely spliced RNAs out of the nucleus from different viruses including HIV-1, HTLV-1 and influenza A. Interacts with, and mediates the nuclear export of HIV-1 Rev and HTLV-1 Rex proteins. Involved in HTLV-1 Rex multimerization. In Homo sapiens (Human), this protein is Exportin-1 (XPO1).